The chain runs to 269 residues: MLRIDSLSKRYPTGDMALKGVTLEVPDGQVMALIGPSGAGKSTLLRCINRLVEPTSGSIWLNGIDLTRLNTRELRQARRKIGMIFQEYALVERLTVMENVLSGQLGYVNFWQSWFRKFPQATIDEAFRLLDRVGLSDFPDKRADALSGGQRQRVGIARALLQNPELLLVDEPTASLDPKTSRQIMRLINELASERGLSVIINIHDVPLAQMFAQRIVGLRFGEVVYDGPPNRLTPSVLNEIYGEEDWNASGPAQDSEENEAVSAGVATH.

Residues 2 to 246 enclose the ABC transporter domain; sequence LRIDSLSKRY…VLNEIYGEED (245 aa). ATP is bound at residue 35 to 42; it reads GPSGAGKS. Residues 246 to 269 form a disordered region; that stretch reads DWNASGPAQDSEENEAVSAGVATH.

The protein belongs to the ABC transporter superfamily. Phosphonates importer (TC 3.A.1.9.1) family. As to quaternary structure, the complex is composed of two ATP-binding proteins (PhnC), two transmembrane proteins (PhnE) and a solute-binding protein (PhnD).

Its subcellular location is the cell inner membrane. The enzyme catalyses phosphonate(out) + ATP + H2O = phosphonate(in) + ADP + phosphate + H(+). Its function is as follows. Part of the ABC transporter complex PhnCDE involved in phosphonates import. Responsible for energy coupling to the transport system. This Synechococcus sp. (strain JA-2-3B'a(2-13)) (Cyanobacteria bacterium Yellowstone B-Prime) protein is Phosphonates import ATP-binding protein PhnC 2.